The following is a 346-amino-acid chain: Dimethyladenosine transferase 1, mitochondrial (346 aa).

The N-terminal 27 residues, 1–27 (MATQGVLAKYRLPPLPTIGEIIKLFNL), are a transit peptide targeting the mitochondrion. Residues N36, L38, G63, E85, K86, D111, I112, and N141 each coordinate S-adenosyl-L-methionine.

Belongs to the class I-like SAM-binding methyltransferase superfamily. rRNA adenine N(6)-methyltransferase family. KsgA subfamily.

The protein localises to the mitochondrion. It catalyses the reaction adenosine(N)/adenosine(N+1) in rRNA + 4 S-adenosyl-L-methionine = N(6)-dimethyladenosine(N)/N(6)-dimethyladenosine(N+1) in rRNA + 4 S-adenosyl-L-homocysteine + 4 H(+). Mitochondrial methyltransferase which uses S-adenosyl methionine to dimethylate two highly conserved adjacent adenosine residues (A1583 and A1584) within the loop of helix 45 at the 3-prime end of 12S rRNA, thereby regulating the assembly or stability of the small subunit of the mitochondrial ribosome. Also required for basal transcription of mitochondrial DNA, probably via its interaction with POLRMT and TFAM. Stimulates transcription independently of the methyltransferase activity. The polypeptide is Dimethyladenosine transferase 1, mitochondrial (tfb1m) (Xenopus tropicalis (Western clawed frog)).